A 460-amino-acid chain; its full sequence is Putative RNA-guided DNA endonuclease MT2953 (460 aa).

Catalysis depends on residues Asp-224 and Glu-313. Residues Cys-372, Cys-375, Cys-389, and Cys-392 each contribute to the Zn(2+) site. Residue Asp-399 is part of the active site. Positions Val-415 to Lys-460 are disordered.

In the N-terminal section; belongs to the transposase 2 family. It in the C-terminal section; belongs to the transposase 35 family.

An RNA-guided dsDNA endonuclease. When guided by an RNA derived from the right-end element of its insertion sequence element (IS), cleaves DNA downstream of the transposon-associated motif (TAM). Cleaves supercoiled and linear DNA in a staggered manner 15-21 bases from the TAM yielding 5'-overhangs. Binds reRNA, an approximately 150 nucleotide base sRNA derived from the 3' end of its own gene, the right end (RE) of the insertion sequence (IS) plus sequence downstream of the IS. The sequence is that of Putative RNA-guided DNA endonuclease MT2953 from Mycobacterium tuberculosis (strain CDC 1551 / Oshkosh).